Here is an 890-residue protein sequence, read N- to C-terminus: DNA mismatch repair protein MutS (890 aa).

ATP is bound at residue 645 to 652; sequence GPNMAGKS.

This sequence belongs to the DNA mismatch repair MutS family.

Its function is as follows. This protein is involved in the repair of mismatches in DNA. It is possible that it carries out the mismatch recognition step. This protein has a weak ATPase activity. The polypeptide is DNA mismatch repair protein MutS (Rickettsia rickettsii (strain Iowa)).